A 436-amino-acid chain; its full sequence is Glutamyl-tRNA reductase 2 (436 aa).

Substrate-binding positions include 49 to 52, S106, 111 to 113, and Q117; these read TCNR and EPQ. C50 serves as the catalytic Nucleophile. Residue 186 to 191 participates in NADP(+) binding; that stretch reads GAGKMC.

It belongs to the glutamyl-tRNA reductase family. As to quaternary structure, homodimer.

It carries out the reaction (S)-4-amino-5-oxopentanoate + tRNA(Glu) + NADP(+) = L-glutamyl-tRNA(Glu) + NADPH + H(+). The protein operates within porphyrin-containing compound metabolism; protoporphyrin-IX biosynthesis; 5-aminolevulinate from L-glutamyl-tRNA(Glu): step 1/2. Functionally, catalyzes the NADPH-dependent reduction of glutamyl-tRNA(Glu) to glutamate 1-semialdehyde (GSA). The sequence is that of Glutamyl-tRNA reductase 2 from Koribacter versatilis (strain Ellin345).